A 138-amino-acid polypeptide reads, in one-letter code: Large ribosomal subunit protein uL16 (138 aa).

Residues 1-19 (MLIPKRVKYRRQHRPHRSG) show a composition bias toward basic residues. The disordered stretch occupies residues 1-24 (MLIPKRVKYRRQHRPHRSGVSKGG).

It belongs to the universal ribosomal protein uL16 family. As to quaternary structure, part of the 50S ribosomal subunit.

Its function is as follows. Binds 23S rRNA and is also seen to make contacts with the A and possibly P site tRNAs. The sequence is that of Large ribosomal subunit protein uL16 from Corynebacterium jeikeium (strain K411).